Here is a 258-residue protein sequence, read N- to C-terminus: Ribonuclease HII (258 aa).

The region spanning 71–258 (ELIAGIDEVG…PIKSMVNFKY (188 aa)) is the RNase H type-2 domain. A divalent metal cation-binding residues include Asp77, Glu78, and Asp169.

It belongs to the RNase HII family. The cofactor is Mn(2+). It depends on Mg(2+) as a cofactor.

Its subcellular location is the cytoplasm. The enzyme catalyses Endonucleolytic cleavage to 5'-phosphomonoester.. Its function is as follows. Endonuclease that specifically degrades the RNA of RNA-DNA hybrids. In Lactococcus lactis subsp. cremoris (strain SK11), this protein is Ribonuclease HII.